The following is an 89-amino-acid chain: Small ribosomal subunit protein uS17A (89 aa).

This sequence belongs to the universal ribosomal protein uS17 family. Part of the 30S ribosomal subunit.

Its function is as follows. One of the primary rRNA binding proteins, it binds specifically to the 5'-end of 16S ribosomal RNA. In Bacteroides thetaiotaomicron (strain ATCC 29148 / DSM 2079 / JCM 5827 / CCUG 10774 / NCTC 10582 / VPI-5482 / E50), this protein is Small ribosomal subunit protein uS17A.